The primary structure comprises 69 residues: DNA-directed RNA polymerase subunit omega (69 aa).

This sequence belongs to the RNA polymerase subunit omega family. The RNAP catalytic core consists of 2 alpha, 1 beta, 1 beta' and 1 omega subunit. When a sigma factor is associated with the core the holoenzyme is formed, which can initiate transcription.

It catalyses the reaction RNA(n) + a ribonucleoside 5'-triphosphate = RNA(n+1) + diphosphate. Functionally, promotes RNA polymerase assembly. Latches the N- and C-terminal regions of the beta' subunit thereby facilitating its interaction with the beta and alpha subunits. The chain is DNA-directed RNA polymerase subunit omega from Heliobacterium modesticaldum (strain ATCC 51547 / Ice1).